The primary structure comprises 299 residues: 33 kDa chaperonin (299 aa).

Intrachain disulfides connect C234–C236 and C268–C271.

The protein belongs to the HSP33 family. In terms of processing, under oxidizing conditions two disulfide bonds are formed involving the reactive cysteines. Under reducing conditions zinc is bound to the reactive cysteines and the protein is inactive.

Its subcellular location is the cytoplasm. Its function is as follows. Redox regulated molecular chaperone. Protects both thermally unfolding and oxidatively damaged proteins from irreversible aggregation. Plays an important role in the bacterial defense system toward oxidative stress. This is 33 kDa chaperonin from Pseudomonas putida (strain ATCC 47054 / DSM 6125 / CFBP 8728 / NCIMB 11950 / KT2440).